A 513-amino-acid polypeptide reads, in one-letter code: MQLNSTEISDLIKQRIESFNVVSEARNEGTIVSVSDGIIRIHGLADVMQGEMIELPGGRYALALNLERDSVGAVVMGPYADLKEGMKVTGTGRILEVPVGPELLGRVVNTLGEPIDGKGPIEAKLTSPVEVIAPGVIDRQSVDQPVQTGYKSVDSMIPIGRGQRELIIGDRQTGKTAMAIDAIINQKNSGIFSIYVAIGQKASTIANVVRKLEEHGALKNTIVVVASASESAALQYLAPYAGCAMGEYFRDRGEDALIVYDDLSKQAVAYRQISLLLKRPPGREAFPGDVFYLHSRLLERAARVNAEYVERFTNGEVKGKTGSLTALPIIETQAGDVSAFVPTNVISITDGQIFLQTELFNAGVRPAVDPGISVSRVGGSAQTKIIKKLSGGIRTALAAYRELAAFAQFSSDLDEATKRQLNHGQKVTELMKQKQYAPMSVFDQALTIFAAERGYLSDIELSKVLDFEAALLSYARGQYAELAAEIDKTGAYNDEIEAQLKKLTDDFKATQTW.

Residue 169–176 (GDRQTGKT) coordinates ATP.

It belongs to the ATPase alpha/beta chains family. F-type ATPases have 2 components, CF(1) - the catalytic core - and CF(0) - the membrane proton channel. CF(1) has five subunits: alpha(3), beta(3), gamma(1), delta(1), epsilon(1). CF(0) has three main subunits: a(1), b(2) and c(9-12). The alpha and beta chains form an alternating ring which encloses part of the gamma chain. CF(1) is attached to CF(0) by a central stalk formed by the gamma and epsilon chains, while a peripheral stalk is formed by the delta and b chains.

It localises to the cell inner membrane. The enzyme catalyses ATP + H2O + 4 H(+)(in) = ADP + phosphate + 5 H(+)(out). Its function is as follows. Produces ATP from ADP in the presence of a proton gradient across the membrane. The alpha chain is a regulatory subunit. The protein is ATP synthase subunit alpha of Vibrio vulnificus (strain CMCP6).